A 286-amino-acid polypeptide reads, in one-letter code: PTS system mannose-specific EIID component (286 aa).

N-formylmethionine is present on Met1. Residues 1 to 17 (MSEMVDTTQTTTEKKLT) are Cytoplasmic-facing. One can recognise a PTS EIID domain in the interval 14–284 (KKLTQSDIRG…GIAGYACGLL (271 aa)). An intramembrane segment occupies 18–55 (QSDIRGVFLRSNLFQGSWNFERMQALGFCFSMVPAIRR). Topologically, residues 56 to 62 (LYPENNE) are cytoplasmic. Residues 63–95 (ARKQAIRRHLEFFNTQPFVAAPILGVTLALEEQ) lie within the membrane without spanning it. At 96–103 (RANGAEID) the chain is on the cytoplasmic side. At 104–143 (DGAINGIKVGLMGPLAGVGDPIFWGTVRPVFAALGAGIAM) the chain is embedded in the membrane. Over 144–147 (SGSL) the chain is Periplasmic. The segment at 148–176 (LGPLLFFILFNLVRLATRYYGVAYGYSKG) is a transmembrane helix. Topologically, residues 177 to 186 (IDIVKDMGGG) are cytoplasmic. The segment at 187 to 212 (FLQKLTEGASILGLFVMGALVNKWTH) is a transmembrane helix. The Periplasmic segment spans residues 213–244 (VNIPLVVSRITDQTGKEHVTTVQTILDQLMPG). Positions 245-258 (LVPLLLTFACMWLL) form a transmembrane segment. At 259–264 (RKKVNP) the chain is on the cytoplasmic side. Over 265–283 (LWIIVGFFVIGIAGYACGL) the chain traverses the membrane. At 284–286 (LGL) the chain is on the periplasmic side.

Homotrimer of protomers that are composed of two subunits, IIC and IID.

It localises to the cell inner membrane. Functionally, the phosphoenolpyruvate-dependent sugar phosphotransferase system (sugar PTS), a major carbohydrate active transport system, catalyzes the phosphorylation of incoming sugar substrates concomitantly with their translocation across the cell membrane. The enzyme II ManXYZ PTS system is involved in mannose transport. The protein is PTS system mannose-specific EIID component (manZ) of Escherichia coli O6:H1 (strain CFT073 / ATCC 700928 / UPEC).